The sequence spans 291 residues: 3-methylcatechol 2,3-dioxygenase (291 aa).

VOC domains lie at 5–119 (RLGY…IYYG) and 143–264 (GLGH…YGWG). Fe cation is bound by residues His146, His210, and Glu260.

Belongs to the extradiol ring-cleavage dioxygenase family. Homooctamer. It depends on Fe(2+) as a cofactor.

The catalysed reaction is 3-methylcatechol + O2 = 2-hydroxy-6-oxo-2,4-heptadienoate + H(+). The protein operates within xenobiotic degradation; toluene degradation. This Pseudomonas putida (strain ATCC 700007 / DSM 6899 / JCM 31910 / BCRC 17059 / LMG 24140 / F1) protein is 3-methylcatechol 2,3-dioxygenase (todE).